A 43-amino-acid chain; its full sequence is Protein PsbN (43 aa).

A helical membrane pass occupies residues 7–27 (LSIAIGSILLVITGFAIYTAF).

It belongs to the PsbN family.

The protein localises to the cellular thylakoid membrane. Its function is as follows. May play a role in photosystem I and II biogenesis. This is Protein PsbN from Crocosphaera subtropica (strain ATCC 51142 / BH68) (Cyanothece sp. (strain ATCC 51142)).